We begin with the raw amino-acid sequence, 304 residues long: UDP-3-O-acyl-N-acetylglucosamine deacetylase (304 aa).

Zn(2+) is bound by residues His-78, His-237, and Asp-241. His-264 functions as the Proton donor in the catalytic mechanism.

It belongs to the LpxC family. Zn(2+) serves as cofactor.

It carries out the reaction a UDP-3-O-[(3R)-3-hydroxyacyl]-N-acetyl-alpha-D-glucosamine + H2O = a UDP-3-O-[(3R)-3-hydroxyacyl]-alpha-D-glucosamine + acetate. The protein operates within glycolipid biosynthesis; lipid IV(A) biosynthesis; lipid IV(A) from (3R)-3-hydroxytetradecanoyl-[acyl-carrier-protein] and UDP-N-acetyl-alpha-D-glucosamine: step 2/6. In terms of biological role, catalyzes the hydrolysis of UDP-3-O-myristoyl-N-acetylglucosamine to form UDP-3-O-myristoylglucosamine and acetate, the committed step in lipid A biosynthesis. This Methylococcus capsulatus (strain ATCC 33009 / NCIMB 11132 / Bath) protein is UDP-3-O-acyl-N-acetylglucosamine deacetylase.